The chain runs to 142 residues: Mitochondrial import receptor subunit TOM22 homolog (142 aa).

A compositionally biased stretch (low complexity) spans Met1–Gly11. The segment at Met1 to Glu42 is disordered. At Ala2 the chain carries N-acetylalanine. The Cytoplasmic portion of the chain corresponds to Ala2–Ala83. Residue Ser15 is modified to Phosphoserine. Acidic residues predominate over residues Lys27–Glu42. The interval Asp41–Gly50 is import sequence; necessary for mitochondrion outer membrane localization and integration in the TOM complex. A Phosphothreonine modification is found at Thr43. A Phosphoserine modification is found at Ser45. Positions Ala83–Thr103 are TMD; necessary for mitochondrion outer membrane localization and integration in the TOM complex. A helical membrane pass occupies residues Ala84–Thr103. Residues Glu104 to Ile142 are Mitochondrial intermembrane-facing. A C-tail signal; necessary for mitochondrion outer membrane localization and integration in the TOM complex region spans residues Pro123 to Ile142.

This sequence belongs to the Tom22 family. Forms part of the preprotein translocase complex of the outer mitochondrial membrane (TOM complex) which consists of at least 7 different proteins (TOMM5, TOMM6, TOMM7, TOMM20, TOMM22, TOMM40 and TOMM70). Interacts with TOMM40. Interacts with PPP2R2B. In terms of tissue distribution, ubiquitous.

The protein localises to the mitochondrion outer membrane. Central receptor component of the translocase of the outer membrane of mitochondria (TOM complex) responsible for the recognition and translocation of cytosolically synthesized mitochondrial preproteins. Together with the peripheral receptor TOM20 functions as the transit peptide receptor and facilitates the movement of preproteins into the translocation pore. Required for the translocation across the mitochondrial outer membrane of cytochrome P450 monooxygenases. The polypeptide is Mitochondrial import receptor subunit TOM22 homolog (TOMM22) (Homo sapiens (Human)).